The sequence spans 363 residues: Pyrimidine monooxygenase RutA (363 aa).

FMN contacts are provided by residues 49–50 (IK), N115, E124, 140–141 (RY), and S190.

The protein belongs to the NtaA/SnaA/DszA monooxygenase family. RutA subfamily.

It carries out the reaction uracil + FMNH2 + NADH + O2 = (Z)-3-ureidoacrylate + FMN + NAD(+) + H2O + H(+). It catalyses the reaction thymine + FMNH2 + NADH + O2 = (Z)-2-methylureidoacrylate + FMN + NAD(+) + H2O + H(+). Functionally, catalyzes the pyrimidine ring opening between N-3 and C-4 by an unusual flavin hydroperoxide-catalyzed mechanism, adding oxygen atoms in the process to yield ureidoacrylate peracid, that immediately reacts with FMN forming ureidoacrylate and FMN-N(5)-oxide. The FMN-N(5)-oxide reacts spontaneously with NADH to produce FMN. Requires the flavin reductase RutF to regenerate FMN in vivo. In Escherichia coli O127:H6 (strain E2348/69 / EPEC), this protein is Pyrimidine monooxygenase RutA.